Reading from the N-terminus, the 186-residue chain is Casparian strip membrane protein 3 (186 aa).

Residues 1–26 lie on the Cytoplasmic side of the membrane; the sequence is MKAGALELGEGSKTSIPRGGVNRGIS. Residues 27–47 form a helical membrane-spanning segment; it reads ILDFILRLITIIGTLGSAIAM. At 48–74 the chain is on the extracellular side; that stretch reads GTTNETLPFFTQFTQFRAEYDDLPTFT. N-linked (GlcNAc...) asparagine glycosylation occurs at Asn51. The chain crosses the membrane as a helical span at residues 75–95; the sequence is FFVIANSIVSGYLVLSLPMSI. Over 96 to 107 the chain is Cytoplasmic; sequence LHIVRSGARASR. The chain crosses the membrane as a helical span at residues 108–128; sequence IVLIFFDTAMLALLTAAASAA. Over 129 to 161 the chain is Extracellular; it reads SAIVYLAHKGNAQANWFAICQQFKSFCERISGS. The helical transmembrane segment at 162-182 threads the bilayer; sequence LIGSFGGIILFILLVLLSAVA. Topologically, residues 183–186 are cytoplasmic; that stretch reads LSRC.

The protein belongs to the Casparian strip membrane proteins (CASP) family. As to quaternary structure, homodimer and heterodimers.

The protein localises to the cell membrane. In terms of biological role, regulates membrane-cell wall junctions and localized cell wall deposition. Required for establishment of the Casparian strip membrane domain (CSD) and the subsequent formation of Casparian strips, a cell wall modification of the root endodermis that determines an apoplastic barrier between the intraorganismal apoplasm and the extraorganismal apoplasm and prevents lateral diffusion. This Vitis vinifera (Grape) protein is Casparian strip membrane protein 3.